The chain runs to 113 residues: U11-theraphotoxin-Hhn1a (113 aa).

Positions 1 to 21 (MNTVRVTFLLVFVLAVSLGQA) are cleaved as a signal peptide. Residues 22 to 74 (DKDENRMEMQGKTEQGKSYLDFAENLLLQKLEELEAKLLEEDSEESRNSRQKR) constitute a propeptide that is removed on maturation. 3 cysteine pairs are disulfide-bonded: C75-C90, C82-C95, and C89-C110.

Belongs to the neurotoxin 14 (magi-1) family. 01 (HNTX-16) subfamily. As to expression, expressed by the venom gland.

It is found in the secreted. Functionally, probable ion channel inhibitor. This chain is U11-theraphotoxin-Hhn1a, found in Cyriopagopus hainanus (Chinese bird spider).